Here is a 101-residue protein sequence, read N- to C-terminus: Fructose-bisphosphate aldolase (101 aa).

Lys11 functions as the Schiff-base intermediate with dihydroxyacetone-P in the catalytic mechanism.

This sequence belongs to the class I fructose-bisphosphate aldolase family.

It catalyses the reaction beta-D-fructose 1,6-bisphosphate = D-glyceraldehyde 3-phosphate + dihydroxyacetone phosphate. It functions in the pathway carbohydrate degradation; glycolysis; D-glyceraldehyde 3-phosphate and glycerone phosphate from D-glucose: step 4/4. The sequence is that of Fructose-bisphosphate aldolase from Lymnaea stagnalis (Great pond snail).